Reading from the N-terminus, the 351-residue chain is MTIAIERNIQRGLFDLVDDWLKRDRFVFIGWSGLLLFPCSYLALGAWFTGTTFVTSWYTHGLASSYLEGCNFLTAAVSSPANSMGHSLLFLWGPEAQGDFTRWCQIGGLWTFTALHGAFGLIGFCLRQFEIARLVGIRPYNAIAFSGPIAVFVSVFLIYPLGQASWFFAPSFGVAAIFRFILFLQGFHNWTLNPFHMMGVAGILGGALLCAIHGATVENTLFEDGEAANTFRAFTPTQSEETYSMVTANRFWSQIFGVAFSNKRWLHFFMLFVPVTGLWTSSIGIIGLALNLRAYDFVSQELRAAEDPEFETFYTKNLLLNEGIRAWMATQDQPHENFVFPEEVLPRGNAL.

A helical transmembrane segment spans residues 39 to 59 (CSYLALGAWFTGTTFVTSWYT). Chlorophyll a is bound at residue His-116. The chain crosses the membrane as a helical span at residues 123–139 (GFCLRQFEIARLVGIRP). Residues Gln-128 and Asn-141 each contribute to the pheophytin a site. The chain crosses the membrane as a helical span at residues 151–164 (VFVSVFLIYPLGQA). Chlorophyll a is bound at residue His-196. Residues 206-226 (GALLCAIHGATVENTLFEDGE) traverse the membrane as a helical segment. Residues His-213 and Phe-260 each coordinate a plastoquinone. Position 213 (His-213) interacts with Fe cation. His-267 is a Fe cation binding site. Residues 277–293 (GLWTSSIGIIGLALNLR) traverse the membrane as a helical segment.

It belongs to the reaction center PufL/M/PsbA/D family. In terms of assembly, PSII is composed of 1 copy each of membrane proteins PsbA, PsbB, PsbC, PsbD, PsbE, PsbF, PsbH, PsbI, PsbJ, PsbK, PsbL, PsbM, PsbT, PsbY, PsbZ, Psb30/Ycf12, at least 3 peripheral proteins of the oxygen-evolving complex and a large number of cofactors. It forms dimeric complexes. The cofactor is The D1/D2 heterodimer binds P680, chlorophylls that are the primary electron donor of PSII, and subsequent electron acceptors. It shares a non-heme iron and each subunit binds pheophytin, quinone, additional chlorophylls, carotenoids and lipids. There is also a Cl(-1) ion associated with D1 and D2, which is required for oxygen evolution. The PSII complex binds additional chlorophylls, carotenoids and specific lipids..

It localises to the plastid. The protein resides in the chloroplast thylakoid membrane. The catalysed reaction is 2 a plastoquinone + 4 hnu + 2 H2O = 2 a plastoquinol + O2. In terms of biological role, photosystem II (PSII) is a light-driven water:plastoquinone oxidoreductase that uses light energy to abstract electrons from H(2)O, generating O(2) and a proton gradient subsequently used for ATP formation. It consists of a core antenna complex that captures photons, and an electron transfer chain that converts photonic excitation into a charge separation. The D1/D2 (PsbA/PsbD) reaction center heterodimer binds P680, the primary electron donor of PSII as well as several subsequent electron acceptors. D2 is needed for assembly of a stable PSII complex. The polypeptide is Photosystem II D2 protein (Galdieria sulphuraria (Red alga)).